Here is a 90-residue protein sequence, read N- to C-terminus: Small ribosomal subunit protein bS16 (90 aa).

The protein belongs to the bacterial ribosomal protein bS16 family.

This is Small ribosomal subunit protein bS16 from Bacillus licheniformis (strain ATCC 14580 / DSM 13 / JCM 2505 / CCUG 7422 / NBRC 12200 / NCIMB 9375 / NCTC 10341 / NRRL NRS-1264 / Gibson 46).